The chain runs to 121 residues: Protein TusC (121 aa).

Belongs to the DsrF/TusC family. Heterohexamer, formed by a dimer of trimers. The hexameric TusBCD complex contains 2 copies each of TusB, TusC and TusD. The TusBCD complex interacts with TusE.

It localises to the cytoplasm. Part of a sulfur-relay system required for 2-thiolation of 5-methylaminomethyl-2-thiouridine (mnm(5)s(2)U) at tRNA wobble positions. This Yersinia pestis bv. Antiqua (strain Antiqua) protein is Protein TusC.